A 1174-amino-acid polypeptide reads, in one-letter code: ATP-dependent DNA helicase SRS2 (1174 aa).

Residues 14-316 form the UvrD-like helicase ATP-binding domain; the sequence is QLNTQQRAAA…IILVENYRSS (303 aa). Residue 38–43 coordinates ATP; that stretch reads GTGKTK. Residues 222-243 are leucine-zipper; it reads LLMYTFRLLTRVRVLSNIKHVL. Residue Arg314 participates in ATP binding. Residues 317–654 enclose the UvrD-like helicase C-terminal domain; that stretch reads QKILNTSEIL…TISTIHGAKG (338 aa). The tract at residues 676–704 is disordered; it reads DDKKDESEEDEEEDQENSKKDASPKKTRV. A Phosphoserine modification is found at Ser833. 3 disordered regions span residues 865–896, 909–973, and 994–1024; these read SKINGNYAPKSRVKSPEKRYAPETTSFHSPTK, NVPS…DKVT, and ELHPPEYSNKSGQSLTSSEFSGFSSACSNSD. Composition is skewed to polar residues over residues 909-922 and 935-955; these read NVPSRQEFHSSTGK and TDISPRSSTRSLKGASPNKTS. Basic and acidic residues predominate over residues 956–973; sequence HMSDDLMRPSPTRKDKVT. The segment covering 1007–1023 has biased composition (low complexity); that stretch reads SLTSSEFSGFSSACSNS.

This sequence belongs to the helicase family. UvrD subfamily.

Its subcellular location is the nucleus. It catalyses the reaction Couples ATP hydrolysis with the unwinding of duplex DNA by translocating in the 3'-5' direction.. The enzyme catalyses ATP + H2O = ADP + phosphate + H(+). ATP-dependent DNA helicase involved in DNA repair at least for UV-induced lesions. The polarity of the helicase activity was determined to be 3' to 5'. In Saccharomyces cerevisiae (strain ATCC 204508 / S288c) (Baker's yeast), this protein is ATP-dependent DNA helicase SRS2 (SRS2).